Here is an 823-residue protein sequence, read N- to C-terminus: Protein FAM83G (823 aa).

Alanine 2 carries the post-translational modification N-acetylalanine. The segment at 2-312 is DUF1669; the sequence is AFSQVQCLDD…LYLMSHSVSL (311 aa). Phosphoserine is present on serine 4. The tract at residues 75-108 is disordered; it reads DPGSEDPRGTGPSQGPEDNGVGDGEEASGADGVP. A phosphoserine mark is found at serine 124, serine 127, and serine 356. The segment at 450–823 is disordered; the sequence is RDTSQASAQH…AQAPRDRKDP (374 aa). Over residues 452 to 465 the composition is skewed to polar residues; the sequence is TSQASAQHQLWKQS. Residues 497–508 show a composition bias toward pro residues; the sequence is DPEPLPPVPKPR. Residues 529 to 543 are compositionally biased toward basic and acidic residues; sequence LPKEEAPQNGTDHRL. The segment covering 578-587 has biased composition (acidic residues); sequence GVEEEDDDDY. 5 positions are modified to phosphoserine: serine 610, serine 614, serine 616, serine 650, and serine 666. 2 stretches are compositionally biased toward basic and acidic residues: residues 672-681 and 809-823; these read RGREEADALK and DSKR…RKDP.

This sequence belongs to the FAM83 family. In terms of assembly, interacts with SMAD1 (via MH2 domain); in a SMAD4-independent manner. Directly interacts (via DUF1669) with casein kinase isoforms CSNK1A1 and CSNK1A1L. Phosphorylated in vitro by CSNK1A1. In terms of processing, BMP signaling induces the phosphorylation by BMPR1A at Ser-610, Ser-614 and Ser-616. Phosphorylation at Ser-610 is necessary for the activation of SMAD4-independent BMP target genes such as NEDD9 and ASNS.

It is found in the cytoplasm. The protein resides in the cytosol. It localises to the nucleus. Functionally, substrate for type I BMP receptor kinase involved in regulation of some target genes of the BMP signaling pathway. Also regulates the expression of several non-BMP target genes, suggesting a role in other signaling pathways. The chain is Protein FAM83G (FAM83G) from Homo sapiens (Human).